Consider the following 171-residue polypeptide: Neudesin (171 aa).

The signal sequence occupies residues 1–30 (MARPAPWWRLRLLAALVLALALVPVPSAWA). The Cytochrome b5 heme-binding domain occupies 43-128 (VRLFTEEELA…KELEALDDVF (86 aa)). Lys135 is modified (N6-acetyllysine).

The protein belongs to the cytochrome b5 family. MAPR subfamily. As to quaternary structure, interacts with PINK1 and PARK7. As to expression, in the embryo, expressed most abundantly in brain and spinal cord. Widely expressed in adult tissues including brain, heart, lung and kidney. In brain, expressed in neurons but not in glial cells. In the hypothalamus is expressed primarily in the paraventricular nucleus (PVN), with lower levels of expression in the arcuate nucleus (ARC).

It is found in the secreted. It localises to the extracellular space. Its subcellular location is the mitochondrion. The protein localises to the endoplasmic reticulum. Functionally, acts as a neurotrophic factor in postnatal mature neurons, enhancing neuronal survival. Promotes cell proliferation and neurogenesis in undifferentiated neural pro-genitor cells at the embryonic stage and inhibits differentiation of astrocytes. Its neurotrophic activity is exerted via MAPK1/ERK2, MAPK3/ERK1 and AKT1/AKT pathways. Neurotrophic activity is enhanced by binding to heme. Also acts as an anorexigenic neurotrophic factor that contributes to energy balance. This is Neudesin from Mus musculus (Mouse).